Reading from the N-terminus, the 228-residue chain is MDQLKRMAAEAAAEYVKDGMKIGLGSGSTVFEFVRVLGEKAKEGLNIQAVAASRKTEALAKACGIHIIDFPTMEKLEVAFDGADEIAPGLMLLKGGGGSLLREKLVAAAAKRLVVLADESKLVEELGAFKLPVEIIPFGWETTAMRIEALGGVASLRQTGKSPFVSDNHNWILDCDFGNIRDPYSLHEKVKKLVGVVETGLFLDMACEAIVASKNGIHHITKGDEFNV.

Residues serine 26–threonine 29, aspartate 81–aspartate 84, and lysine 94–glycine 97 contribute to the substrate site. Glutamate 103 functions as the Proton acceptor in the catalytic mechanism. Lysine 121 contributes to the substrate binding site.

The protein belongs to the ribose 5-phosphate isomerase family. In terms of assembly, homodimer.

It carries out the reaction aldehydo-D-ribose 5-phosphate = D-ribulose 5-phosphate. It participates in carbohydrate degradation; pentose phosphate pathway; D-ribose 5-phosphate from D-ribulose 5-phosphate (non-oxidative stage): step 1/1. Its function is as follows. Catalyzes the reversible conversion of ribose-5-phosphate to ribulose 5-phosphate. The polypeptide is Ribose-5-phosphate isomerase A (Shouchella clausii (strain KSM-K16) (Alkalihalobacillus clausii)).